Reading from the N-terminus, the 739-residue chain is Catalase-peroxidase (739 aa).

Residues 99–227 constitute a cross-link (tryptophyl-tyrosyl-methioninium (Trp-Tyr) (with M-253)); that stretch reads WHSAGTYRMG…LAAVQMGLIY (129 aa). His-100 acts as the Proton acceptor in catalysis. Positions 227–253 form a cross-link, tryptophyl-tyrosyl-methioninium (Tyr-Met) (with W-99); that stretch reads YVNPEGPDGNPDPVASGRDVRETFARM. His-268 serves as a coordination point for heme b.

This sequence belongs to the peroxidase family. Peroxidase/catalase subfamily. Homodimer or homotetramer. It depends on heme b as a cofactor. In terms of processing, formation of the three residue Trp-Tyr-Met cross-link is important for the catalase, but not the peroxidase activity of the enzyme.

It catalyses the reaction H2O2 + AH2 = A + 2 H2O. It carries out the reaction 2 H2O2 = O2 + 2 H2O. In terms of biological role, bifunctional enzyme with both catalase and broad-spectrum peroxidase activity. The protein is Catalase-peroxidase of Syntrophotalea carbinolica (strain DSM 2380 / NBRC 103641 / GraBd1) (Pelobacter carbinolicus).